Here is a 145-residue protein sequence, read N- to C-terminus: Large-conductance mechanosensitive channel (145 aa).

The next 2 helical transmembrane spans lie at valine 14–leucine 34 and glycine 81–valine 101.

The protein belongs to the MscL family. Homopentamer.

It localises to the cell inner membrane. Its function is as follows. Channel that opens in response to stretch forces in the membrane lipid bilayer. May participate in the regulation of osmotic pressure changes within the cell. This chain is Large-conductance mechanosensitive channel, found in Pelobacter propionicus (strain DSM 2379 / NBRC 103807 / OttBd1).